The primary structure comprises 362 residues: 3-isopropylmalate dehydrogenase (362 aa).

77–88 (GPKWGTGSVRPE) contributes to the NAD(+) binding site. Substrate contacts are provided by Arg-95, Arg-105, Arg-134, and Asp-223. 3 residues coordinate Mg(2+): Asp-223, Asp-248, and Asp-252. 287 to 298 (GSAPDLPKGKVN) lines the NAD(+) pocket.

This sequence belongs to the isocitrate and isopropylmalate dehydrogenases family. In terms of assembly, homodimer. It depends on Mg(2+) as a cofactor. The cofactor is Mn(2+).

Its subcellular location is the cytoplasm. The enzyme catalyses (2R,3S)-3-isopropylmalate + NAD(+) = 4-methyl-2-oxopentanoate + CO2 + NADH. Its pathway is amino-acid biosynthesis; L-leucine biosynthesis; L-leucine from 3-methyl-2-oxobutanoate: step 3/4. Catalyzes the oxidation of 3-carboxy-2-hydroxy-4-methylpentanoate (3-isopropylmalate) to 3-carboxy-4-methyl-2-oxopentanoate. The product decarboxylates to 4-methyl-2 oxopentanoate. In Zygosaccharomyces rouxii (strain ATCC 2623 / CBS 732 / NBRC 1130 / NCYC 568 / NRRL Y-229), this protein is 3-isopropylmalate dehydrogenase (LEU2).